Here is an 868-residue protein sequence, read N- to C-terminus: Pentatricopeptide repeat-containing protein At2g27610 (868 aa).

PPR repeat units follow at residues 57 to 91 (DRESYISLLFGFSRDGRTQEAKRLFLNIHRLGMEM), 92 to 126 (DCSIFSSVLKVSATLCDELFGRQLHCQCIKFGFLD), 127 to 157 (DVSVGTSLVDTYMKGSNFKDGRKVFDEMKER), 158 to 192 (NVVTWTTLISGYARNSMNDEVLTLFMRMQNEGTQP), 193 to 227 (NSFTFAAALGVLAEEGVGGRGLQVHTVVVKNGLDK), 228 to 258 (TIPVSNSLINLYLKCGNVRKARILFDKTEVK), 259 to 293 (SVVTWNSMISGYAANGLDLEALGMFYSMRLNYVRL), 294 to 328 (SESSFASVIKLCANLKELRFTEQLHCSVVKYGFLF), 329 to 359 (DQNIRTALMVAYSKCTAMLDALRLFKEIGCV), 361 to 395 (NVVSWTAMISGFLQNDGKEEAVDLFSEMKRKGVRP), 396 to 426 (NEFTYSVILTALPVISPSEVHAQVVKTNYER), 427 to 457 (SSTVGTALLDAYVKLGKVEEAAKVFSGIDDK), 458 to 492 (DIVAWSAMLAGYAQTGETEAAIKMFGELTKGGIKP), 493 to 528 (NEFTFSSILNVCAATNASMGQGKQFHGFAIKSRLDS), 529 to 559 (SLCVSSALLTMYAKKGNIESAEEVFKRQREK), 560 to 594 (DLVSWNSMISGYAQHGQAMKALDVFKEMKKRKVKM), 595 to 625 (DGVTFIGVFAACTHAGLVEEGEKYFDIMVRD), and 631 to 661 (TKEHNSCMVDLYSRAGQLEKAMKVIENMPNP). The interval 666–741 (IWRTILAACR…EPGYSWIEVK (76 aa)) is type E motif. The segment at 742-772 (NKTYSFLAGDRSHPLKDQIYMKLEDLSTRLK) is type E(+) motif. Residues 773 to 868 (DLGYEPDTSY…DGVCSCGDFW (96 aa)) are type DYW motif.

Belongs to the PPR family. PCMP-H subfamily.

The sequence is that of Pentatricopeptide repeat-containing protein At2g27610 (PCMP-H60) from Arabidopsis thaliana (Mouse-ear cress).